Consider the following 201-residue polypeptide: Recombination protein RecR (201 aa).

The segment at 60-75 (CKRCGSYAETEICEIC) adopts a C4-type zinc-finger fold. The 96-residue stretch at 83–178 (HTFCVVEQPE…NVTRIAYGIT (96 aa)) folds into the Toprim domain.

The protein belongs to the RecR family.

May play a role in DNA repair. It seems to be involved in an RecBC-independent recombinational process of DNA repair. It may act with RecF and RecO. The sequence is that of Recombination protein RecR from Leptospira interrogans serogroup Icterohaemorrhagiae serovar copenhageni (strain Fiocruz L1-130).